A 205-amino-acid chain; its full sequence is Outer-membrane lipoprotein LolB (205 aa).

The first 17 residues, 1-17 (MFLRHCITFTLIALLAG), serve as a signal peptide directing secretion. A lipid anchor (N-palmitoyl cysteine) is attached at cysteine 18. A lipid anchor (S-diacylglycerol cysteine) is attached at cysteine 18.

This sequence belongs to the LolB family. In terms of assembly, monomer.

The protein resides in the cell outer membrane. In terms of biological role, plays a critical role in the incorporation of lipoproteins in the outer membrane after they are released by the LolA protein. The protein is Outer-membrane lipoprotein LolB of Pseudomonas putida (strain ATCC 47054 / DSM 6125 / CFBP 8728 / NCIMB 11950 / KT2440).